Consider the following 282-residue polypeptide: Virginiamycin B lyase (282 aa).

Substrate is bound at residue histidine 217. Position 256 (glutamate 256) interacts with Mg(2+). The active-site Proton acceptor is the histidine 258. Position 273 (glutamate 273) interacts with Mg(2+).

It belongs to the Vgb family. In terms of assembly, monomer. Mg(2+) serves as cofactor.

Inactivates the type B streptogramin antibiotics by linearizing the lactone ring at the ester linkage, generating a free phenylglycine carboxylate and converting the threonyl moiety into 2-amino-butenoic acid. The polypeptide is Virginiamycin B lyase (Mycolicibacterium smegmatis (strain ATCC 700084 / mc(2)155) (Mycobacterium smegmatis)).